A 348-amino-acid chain; its full sequence is Dihydroorotase (348 aa).

The Zn(2+) site is built by histidine 17 and histidine 19. Residues 19-21 (HLR) and asparagine 45 each bind substrate. Zn(2+) contacts are provided by lysine 103, histidine 140, and histidine 178. Lysine 103 carries the N6-carboxylysine modification. Position 140 (histidine 140) interacts with substrate. Residue leucine 223 participates in substrate binding. Residue aspartate 251 coordinates Zn(2+). The active site involves aspartate 251. Substrate is bound by residues histidine 255 and alanine 267.

This sequence belongs to the metallo-dependent hydrolases superfamily. DHOase family. Class II DHOase subfamily. In terms of assembly, homodimer. It depends on Zn(2+) as a cofactor.

The catalysed reaction is (S)-dihydroorotate + H2O = N-carbamoyl-L-aspartate + H(+). The protein operates within pyrimidine metabolism; UMP biosynthesis via de novo pathway; (S)-dihydroorotate from bicarbonate: step 3/3. Functionally, catalyzes the reversible cyclization of carbamoyl aspartate to dihydroorotate. This chain is Dihydroorotase, found in Enterobacter sp. (strain 638).